The sequence spans 81 residues: Cytotoxin 3a (81 aa).

Residues 1–21 form the signal peptide; it reads MKTLLLTLVVVTIVCLDLGYT. Cystine bridges form between cysteine 24–cysteine 42, cysteine 35–cysteine 59, cysteine 63–cysteine 74, and cysteine 75–cysteine 80.

The protein belongs to the three-finger toxin family. Short-chain subfamily. Type IA cytotoxin sub-subfamily. Monomer in solution; Homodimer and oligomer in the presence of negatively charged lipids forming a pore with a size ranging between 20 and 30 Angstroms. As to expression, expressed by the venom gland.

It localises to the secreted. The protein resides in the target cell membrane. Shows cytolytic activity on many different cells by forming pore in lipid membranes. In vivo, increases heart rate or kills the animal by cardiac arrest. In addition, it binds to heparin with high affinity, interacts with Kv channel-interacting protein 1 (KCNIP1) in a calcium-independent manner, and binds to integrin alpha-V/beta-3 (ITGAV/ITGB3) with moderate affinity. The chain is Cytotoxin 3a from Naja atra (Chinese cobra).